The primary structure comprises 422 residues: Cyclin-A2 (422 aa).

Residue Met-1 is modified to N-acetylmethionine. Residues 1–62 (MPGTSRHSGR…APQQKLKTRR (62 aa)) are disordered. Ser-5 is subject to Phosphoserine.

It belongs to the cyclin family. Cyclin AB subfamily. Interacts with the CDK1 and CDK2 protein kinases to form serine/threonine kinase holoenzyme complexes. Interacts with CDK1 (hyperphosphorylated form in G1 and underphosphorylated forms in S and G2). Interacts with CDK2; the interaction increases from G1 to G2. Interacts (associated with CDK2 but not with CDK1) with SCAPER; regulates the activity of CCNA2/CDK2 by transiently maintaining CCNA2 in the cytoplasm. Forms a ternary complex with CDK2 and CDKN1B; CDKN1B inhibits the kinase activity of CDK2 through conformational rearrangements. Interacts with INCA1. In terms of assembly, (Microbial infection) Interacts with mouse cytomegalovirus/MCMV kinase M97; this interaction sequesters CCNA2 to the cytoplasm. Polyubiquitinated via 'Lys-11'-linked ubiquitin by the anaphase-promoting complex (APC/C), leading to its degradation by the proteasome. Deubiquitinated and stabilized by USP37 enables entry into S phase. Ubiquitinated during the G1 phase by the SCF(FBXO31) complex, leading to its proteasomal degradation. As to expression, ubiquitous. In the testis, expressed in germ cells and in the ovary, in both germline and somatic cells.

It localises to the nucleus. Its subcellular location is the cytoplasm. Cyclin which controls both the G1/S and the G2/M transition phases of the cell cycle. Functions through the formation of specific serine/threonine kinase holoenzyme complexes with the cyclin-dependent protein kinases CDK1 and CDK2. The cyclin subunit confers the substrate specificity of these complexes and differentially interacts with and activates CDK1 and CDK2 throughout the cell cycle. This is Cyclin-A2 from Mus musculus (Mouse).